A 37-amino-acid polypeptide reads, in one-letter code: Large ribosomal subunit protein bL36c (37 aa).

This sequence belongs to the bacterial ribosomal protein bL36 family.

The protein resides in the plastid. It is found in the chloroplast. This Thalassiosira pseudonana (Marine diatom) protein is Large ribosomal subunit protein bL36c.